A 147-amino-acid chain; its full sequence is Large ribosomal subunit protein uL13 (147 aa).

It belongs to the universal ribosomal protein uL13 family. Part of the 50S ribosomal subunit.

Functionally, this protein is one of the early assembly proteins of the 50S ribosomal subunit, although it is not seen to bind rRNA by itself. It is important during the early stages of 50S assembly. In Pseudarthrobacter chlorophenolicus (strain ATCC 700700 / DSM 12829 / CIP 107037 / JCM 12360 / KCTC 9906 / NCIMB 13794 / A6) (Arthrobacter chlorophenolicus), this protein is Large ribosomal subunit protein uL13.